The chain runs to 600 residues: Arginine--tRNA ligase (600 aa).

The 'HIGH' region signature appears at 123 to 133; it reads PNVAKPMHVGH.

This sequence belongs to the class-I aminoacyl-tRNA synthetase family. Monomer.

Its subcellular location is the cytoplasm. It carries out the reaction tRNA(Arg) + L-arginine + ATP = L-arginyl-tRNA(Arg) + AMP + diphosphate. This is Arginine--tRNA ligase from Caulobacter vibrioides (strain NA1000 / CB15N) (Caulobacter crescentus).